Here is a 775-residue protein sequence, read N- to C-terminus: tRNA(Met) cytidine acetyltransferase TmcA (775 aa).

Disordered stretches follow at residues 1–33 (MPTT…GMDI) and 191–215 (TVEQ…PTDA). The span at 199 to 212 (DPPPSRPVPSPTPP) shows a compositional bias: pro residues. Residues Gln230, 254–263 (GRGKSSAAGL), and Arg403 each bind ATP. Positions 438 to 623 (VEYRQLSAAD…YSVVMLDPCS (186 aa)) constitute an N-acetyltransferase domain. Acetyl-CoA contacts are provided by residues 549–551 (IAT), 556–562 (RSRGLGS), and Glu588.

It belongs to the RNA cytidine acetyltransferase family. TmcA subfamily.

The protein resides in the cytoplasm. The catalysed reaction is cytidine(34) in elongator tRNA(Met) + acetyl-CoA + ATP + H2O = N(4)-acetylcytidine(34) in elongator tRNA(Met) + ADP + phosphate + CoA + H(+). Its function is as follows. Catalyzes the formation of N(4)-acetylcytidine (ac(4)C) at the wobble position of tRNA(Met), by using acetyl-CoA as an acetyl donor and ATP (or GTP). The polypeptide is tRNA(Met) cytidine acetyltransferase TmcA (Haloarcula marismortui (strain ATCC 43049 / DSM 3752 / JCM 8966 / VKM B-1809) (Halobacterium marismortui)).